Reading from the N-terminus, the 41-residue chain is Large ribosomal subunit protein bL36 (41 aa).

This sequence belongs to the bacterial ribosomal protein bL36 family.

This chain is Large ribosomal subunit protein bL36, found in Jannaschia sp. (strain CCS1).